The sequence spans 191 residues: Sporulation-specific protein (191 aa).

In terms of biological role, not essential for sporulation. The polypeptide is Sporulation-specific protein (SPR6) (Saccharomyces cerevisiae (strain ATCC 204508 / S288c) (Baker's yeast)).